The sequence spans 305 residues: MLVTGLEILRKARAEGYGVGAFNTNNMEFTQAILEAAEEMKSPVILALSEGAMKYGGRALTRMVVALAQEARVPVAVHLDHGSSYESVLKALREGFTSVMIDKSHEDFETNVRETKRVVEAAHAVGVTVEAELGRLAGIEEHVAVDEKDALLTNPEEARIFMERTGADYLAVAIGTSHGAYKGKGRPFIDHPRLARIAKLVPAPLVLHGASAVPQELVERFRAAGGEIGEASGIHPEDIKKAISLGIAKINTDTDLRLAFTALVRETLGKNPKEFDPRKYLGPAREAVKEVVKSRMELFGSVGRA.

Residue Ser-49 coordinates D-glyceraldehyde 3-phosphate. Residue Asp-80 is the Proton donor of the active site. The Zn(2+) site is built by His-81, Asp-102, Glu-132, and His-178. Gly-179 contacts dihydroxyacetone phosphate. Residue His-208 participates in Zn(2+) binding. Residues 209-211 and 251-254 contribute to the dihydroxyacetone phosphate site; these read GAS and NTDT.

The protein belongs to the class II fructose-bisphosphate aldolase family. As to quaternary structure, homotetramer. Zn(2+) serves as cofactor.

It catalyses the reaction beta-D-fructose 1,6-bisphosphate = D-glyceraldehyde 3-phosphate + dihydroxyacetone phosphate. The protein operates within carbohydrate degradation; glycolysis; D-glyceraldehyde 3-phosphate and glycerone phosphate from D-glucose: step 4/4. Functionally, catalyzes the aldol condensation of dihydroxyacetone phosphate (DHAP or glycerone-phosphate) with glyceraldehyde 3-phosphate (G3P) to form fructose 1,6-bisphosphate (FBP) in gluconeogenesis and the reverse reaction in glycolysis. The protein is Fructose-bisphosphate aldolase of Thermus caldophilus.